Reading from the N-terminus, the 216-residue chain is MKQDSRFPNLFITDHPLIQHKLTHMRDKDTSTRTFRELLREITLLMGYEITRNLPITTKRVETPLVEVDAPVIAGKKLAIVPVLRAGIGMSDGLLDLVPSARVGHIGVYRADDHRPVEYLVRLPDLEDRIFILCDPMVATGYSAVHAVDVLKRRNVPAANIMFVALVAAPEGVQVFQDAHPDVKLFVASLDSHLNEHAYIVPGLGDAGDRLFGTKN.

5-phospho-alpha-D-ribose 1-diphosphate-binding positions include Arg-85, Arg-110, and 135 to 143 (DPMVATGYS). Residues Ile-200 and 205-207 (GDA) each bind uracil. Asp-206 contacts 5-phospho-alpha-D-ribose 1-diphosphate.

It belongs to the UPRTase family. Mg(2+) serves as cofactor.

It carries out the reaction UMP + diphosphate = 5-phospho-alpha-D-ribose 1-diphosphate + uracil. It functions in the pathway pyrimidine metabolism; UMP biosynthesis via salvage pathway; UMP from uracil: step 1/1. Its activity is regulated as follows. Allosterically activated by GTP. In terms of biological role, catalyzes the conversion of uracil and 5-phospho-alpha-D-ribose 1-diphosphate (PRPP) to UMP and diphosphate. The chain is Uracil phosphoribosyltransferase from Burkholderia lata (strain ATCC 17760 / DSM 23089 / LMG 22485 / NCIMB 9086 / R18194 / 383).